Reading from the N-terminus, the 197-residue chain is MRQATVTRNTLETRITVSLNLDGSGQARFDTGVPFLEHMLDQIARHGLIDLDITAQGDLHIDAHHTVEDLGITLGQAFARAIGDKKGIRRYGHAYVPLDEALSRVVLDLSGRPGLEYHVDYTRATIGSFDVDLFSEFFHGFVNHAMVTLHIDNLRGINSHHQAETIFKAFGRALRMAVEPDPRMAGVTPSTKGTLTA.

It belongs to the imidazoleglycerol-phosphate dehydratase family.

It is found in the cytoplasm. The catalysed reaction is D-erythro-1-(imidazol-4-yl)glycerol 3-phosphate = 3-(imidazol-4-yl)-2-oxopropyl phosphate + H2O. It functions in the pathway amino-acid biosynthesis; L-histidine biosynthesis; L-histidine from 5-phospho-alpha-D-ribose 1-diphosphate: step 6/9. In Laribacter hongkongensis (strain HLHK9), this protein is Imidazoleglycerol-phosphate dehydratase.